Reading from the N-terminus, the 337-residue chain is Anthranilate phosphoribosyltransferase (337 aa).

5-phospho-alpha-D-ribose 1-diphosphate-binding positions include Gly82, 85-86 (GD), Thr90, 92-95 (NIST), 110-118 (KHGGRSVSS), and Ser122. Gly82 is a binding site for anthranilate. Residue Ser94 coordinates Mg(2+). Arg168 is an anthranilate binding site. Asp226 and Glu227 together coordinate Mg(2+).

The protein belongs to the anthranilate phosphoribosyltransferase family. In terms of assembly, homodimer. Mg(2+) serves as cofactor.

The enzyme catalyses N-(5-phospho-beta-D-ribosyl)anthranilate + diphosphate = 5-phospho-alpha-D-ribose 1-diphosphate + anthranilate. It participates in amino-acid biosynthesis; L-tryptophan biosynthesis; L-tryptophan from chorismate: step 2/5. Its function is as follows. Catalyzes the transfer of the phosphoribosyl group of 5-phosphorylribose-1-pyrophosphate (PRPP) to anthranilate to yield N-(5'-phosphoribosyl)-anthranilate (PRA). In Francisella tularensis subsp. holarctica (strain OSU18), this protein is Anthranilate phosphoribosyltransferase.